A 1220-amino-acid polypeptide reads, in one-letter code: ATP-dependent helicase/nuclease subunit A (1220 aa).

One can recognise a UvrD-like helicase ATP-binding domain in the interval 9–473 (VIWTDDQWKS…IDLSQNFRSR (465 aa)). 30 to 37 (AAAGSGKT) provides a ligand contact to ATP. One can recognise a UvrD-like helicase C-terminal domain in the interval 474–782 (PEVLSTTNYL…RMMTIHASKG (309 aa)).

This sequence belongs to the helicase family. AddA subfamily. In terms of assembly, heterodimer of AddA and AddB/RexB. Mg(2+) serves as cofactor.

It catalyses the reaction Couples ATP hydrolysis with the unwinding of duplex DNA by translocating in the 3'-5' direction.. It carries out the reaction ATP + H2O = ADP + phosphate + H(+). In terms of biological role, the heterodimer acts as both an ATP-dependent DNA helicase and an ATP-dependent, dual-direction single-stranded exonuclease. Recognizes the chi site generating a DNA molecule suitable for the initiation of homologous recombination. The AddA nuclease domain is required for chi fragment generation; this subunit has the helicase and 3' -&gt; 5' nuclease activities. This is ATP-dependent helicase/nuclease subunit A from Staphylococcus carnosus (strain TM300).